We begin with the raw amino-acid sequence, 467 residues long: Methylenetetrahydrofolate--tRNA-(uracil-5-)-methyltransferase TrmFO (467 aa).

An FAD-binding site is contributed by 11–16; sequence GAGLAG.

The protein belongs to the MnmG family. TrmFO subfamily. Requires FAD as cofactor.

The protein resides in the cytoplasm. It carries out the reaction uridine(54) in tRNA + (6R)-5,10-methylene-5,6,7,8-tetrahydrofolate + NADH + H(+) = 5-methyluridine(54) in tRNA + (6S)-5,6,7,8-tetrahydrofolate + NAD(+). The enzyme catalyses uridine(54) in tRNA + (6R)-5,10-methylene-5,6,7,8-tetrahydrofolate + NADPH + H(+) = 5-methyluridine(54) in tRNA + (6S)-5,6,7,8-tetrahydrofolate + NADP(+). Catalyzes the folate-dependent formation of 5-methyl-uridine at position 54 (M-5-U54) in all tRNAs. The polypeptide is Methylenetetrahydrofolate--tRNA-(uracil-5-)-methyltransferase TrmFO (Prochlorococcus marinus (strain MIT 9303)).